We begin with the raw amino-acid sequence, 98 residues long: Aspartyl/glutamyl-tRNA(Asn/Gln) amidotransferase subunit C (98 aa).

Positions 77–98 are disordered; the sequence is NEAPNPEGDFFRVPQILNTDEE.

This sequence belongs to the GatC family. As to quaternary structure, heterotrimer of A, B and C subunits.

It catalyses the reaction L-glutamyl-tRNA(Gln) + L-glutamine + ATP + H2O = L-glutaminyl-tRNA(Gln) + L-glutamate + ADP + phosphate + H(+). The catalysed reaction is L-aspartyl-tRNA(Asn) + L-glutamine + ATP + H2O = L-asparaginyl-tRNA(Asn) + L-glutamate + ADP + phosphate + 2 H(+). Allows the formation of correctly charged Asn-tRNA(Asn) or Gln-tRNA(Gln) through the transamidation of misacylated Asp-tRNA(Asn) or Glu-tRNA(Gln) in organisms which lack either or both of asparaginyl-tRNA or glutaminyl-tRNA synthetases. The reaction takes place in the presence of glutamine and ATP through an activated phospho-Asp-tRNA(Asn) or phospho-Glu-tRNA(Gln). The polypeptide is Aspartyl/glutamyl-tRNA(Asn/Gln) amidotransferase subunit C (Crocosphaera subtropica (strain ATCC 51142 / BH68) (Cyanothece sp. (strain ATCC 51142))).